The chain runs to 423 residues: Galactosylceramide sulfotransferase (423 aa).

The Cytoplasmic portion of the chain corresponds to 1-12 (MTLLPKKPCKSK). Residues 13 to 35 (AKGLLLGALFTSFLLLLYSYVVP) traverse the membrane as a helical; Signal-anchor for type II membrane protein segment. Topologically, residues 36–423 (PLYPNMAFTT…WKFLRDFLRW (388 aa)) are lumenal. N-linked (GlcNAc...) asparagine glycans are attached at residues asparagine 66 and asparagine 312.

This sequence belongs to the galactose-3-O-sulfotransferase family. As to expression, expressed in brain, testis, kidney, stomach, small intestine, liver, and lung. Not detected in heart, skeletal muscle, and spleen.

The protein resides in the golgi apparatus membrane. The enzyme catalyses a beta-D-galactosyl-(1&lt;-&gt;1')-N-acylsphing-4-enine + 3'-phosphoadenylyl sulfate = an N-acyl-1-beta-D-(3-O-sulfo)-galactosyl-sphing-4-enine + adenosine 3',5'-bisphosphate + H(+). It carries out the reaction a 1-O-alkyl-2-acyl-3-O-(beta-D-galactosyl)-sn-glycerol + 3'-phosphoadenylyl sulfate = a 1-O-alkyl-2-acyl-3-(beta-D-3-sulfogalactosyl)-sn-glycerol + adenosine 3',5'-bisphosphate + H(+). It catalyses the reaction a beta-D-Gal-(1&lt;-&gt;1')-ceramide + 3'-phosphoadenylyl sulfate = 1-(3-O-sulfo-beta-D-galactosyl)-ceramide + adenosine 3',5'-bisphosphate + H(+). The catalysed reaction is a 1,2-diacyl-3-O-(beta-D-galactosyl)-sn-glycerol + 3'-phosphoadenylyl sulfate = 1,2-diacyl-3-(3-O-sulfo-beta-D-galactosyl)-sn-glycerol + adenosine 3',5'-bisphosphate + H(+). The enzyme catalyses a beta-D-Gal-(1-&gt;4)-beta-D-Glc-(1&lt;-&gt;1)-Cer(d18:1(4E)) + 3'-phosphoadenylyl sulfate = beta-D-3-sulfogalactosyl-(1-&gt;4)-beta-D-glucosyl-(1&lt;-&gt;1')-N-acylsphing-4-enine + adenosine 3',5'-bisphosphate + H(+). The protein operates within lipid metabolism; sphingolipid metabolism. Its function is as follows. Catalyzes the transfer of a sulfate group to position 3 of non-reducing beta-galactosyl residues in glycerolipids and sphingolipids, therefore participates in the biosynthesis of sulfoglycolipids. Catalyzes the synthesis of galactosylceramide sulfate (sulfatide), a major lipid component of the myelin sheath and of monogalactosylalkylacylglycerol sulfate (seminolipid), present in spermatocytes. Seems to prefer beta-glycosides at the non-reducing termini of sugar chains attached to a lipid moiety. Also acts on lactosylceramide, galactosyl 1-alkyl-2-sn-glycerol and galactosyl diacylglycerol (in vitro). The protein is Galactosylceramide sulfotransferase of Mus musculus (Mouse).